Here is a 215-residue protein sequence, read N- to C-terminus: Ribosome maturation factor RimP (215 aa).

Residues 180–215 (KDNRARKEAKKRRGEPDDDVPEGAEADATEEHEQES) form a disordered region. The segment covering 195–207 (PDDDVPEGAEADA) has biased composition (acidic residues).

It belongs to the RimP family.

It localises to the cytoplasm. Its function is as follows. Required for maturation of 30S ribosomal subunits. The sequence is that of Ribosome maturation factor RimP from Mesorhizobium japonicum (strain LMG 29417 / CECT 9101 / MAFF 303099) (Mesorhizobium loti (strain MAFF 303099)).